We begin with the raw amino-acid sequence, 511 residues long: 2-isopropylmalate synthase (511 aa).

The region spanning 5-267 (LIIFDTTLRD…DTDINATHIL (263 aa)) is the Pyruvate carboxyltransferase domain. The Mn(2+) site is built by Asp-14, His-202, His-204, and Asn-238. The regulatory domain stretch occupies residues 392-511 (KLVSLKVCTE…ATNKAQHPQI (120 aa)).

This sequence belongs to the alpha-IPM synthase/homocitrate synthase family. LeuA type 1 subfamily. Homodimer. It depends on Mn(2+) as a cofactor.

The protein resides in the cytoplasm. It catalyses the reaction 3-methyl-2-oxobutanoate + acetyl-CoA + H2O = (2S)-2-isopropylmalate + CoA + H(+). It functions in the pathway amino-acid biosynthesis; L-leucine biosynthesis; L-leucine from 3-methyl-2-oxobutanoate: step 1/4. Functionally, catalyzes the condensation of the acetyl group of acetyl-CoA with 3-methyl-2-oxobutanoate (2-ketoisovalerate) to form 3-carboxy-3-hydroxy-4-methylpentanoate (2-isopropylmalate). This chain is 2-isopropylmalate synthase, found in Ruthia magnifica subsp. Calyptogena magnifica.